The following is a 188-amino-acid chain: Dual specificity protein phosphatase 18 (188 aa).

The Tyrosine-protein phosphatase domain occupies glycine 19–glycine 160. Cysteine 104 (phosphocysteine intermediate) is an active-site residue.

Belongs to the protein-tyrosine phosphatase family. Non-receptor class dual specificity subfamily. As to expression, widely expressed with highest levels in liver, brain, ovary and testis.

The protein resides in the cytoplasm. It is found in the nucleus. The protein localises to the mitochondrion inner membrane. It catalyses the reaction O-phospho-L-tyrosyl-[protein] + H2O = L-tyrosyl-[protein] + phosphate. The enzyme catalyses O-phospho-L-seryl-[protein] + H2O = L-seryl-[protein] + phosphate. The catalysed reaction is O-phospho-L-threonyl-[protein] + H2O = L-threonyl-[protein] + phosphate. With respect to regulation, activated by manganese ions, inhibited by iodoacetic acid. Functionally, can dephosphorylate single and diphosphorylated synthetic MAPK peptides, with preference for the phosphotyrosine and diphosphorylated forms over phosphothreonine. In vitro, dephosphorylates p-nitrophenyl phosphate (pNPP). This Homo sapiens (Human) protein is Dual specificity protein phosphatase 18 (DUSP18).